The sequence spans 86 residues: High affinity immunoglobulin epsilon receptor subunit gamma (86 aa).

The N-terminal stretch at 1–18 (MIPAVILFLLLLVEEAAA) is a signal peptide. Topologically, residues 19–23 (LGEPQ) are extracellular. The helical transmembrane segment at 24–44 (LCYILDAILFLYGIVLTLLYC) threads the bilayer. Residues 45 to 86 (RLKIQVRKADIASREKSDAVYTGLNTRNQETYETLKHEKPPQ) lie on the Cytoplasmic side of the membrane. The 29-residue stretch at 54–82 (DIASREKSDAVYTGLNTRNQETYETLKHE) folds into the ITAM domain. Phosphotyrosine is present on residues tyrosine 65 and tyrosine 76. Threonine 78 bears the Phosphothreonine mark.

It belongs to the CD3Z/FCER1G family. As to quaternary structure, igE Fc receptor is a tetramer of an alpha chain, a beta chain, and two disulfide linked gamma chains. Associates with FCGR1A to form a functional receptor complex. The signaling subunit of immunoglobulin gamma (IgG) Fc receptor complex. As a homodimer or a heterodimer of CD247 and FCER1G, associates with the ligand binding subunit FCGR3A to form a functional receptor complex. Associates with CLEC6A. Interacts with CLEC4E. Interacts (via ITAM domain) with SYK (via SH2 domains); activates SYK, enabling integrin-mediated activation of neutrophils and macrophages. Interacts with common beta chain of interleukin 3 receptor CSF2RB and recruits SYK in response to IL3 stimulation; this interaction is direct. Interacts with CD300LH; the interaction may be indirect. Interacts with CD300LD. Interacts with TARM1. Expressed in leukocytes and pinealocytes. Expression in the pineal gland does not undergo circadian variations.

The protein localises to the cell membrane. Functionally, adapter protein containing an immunoreceptor tyrosine-based activation motif (ITAM) that transduces activation signals from various immunoreceptors. As a component of the high-affinity immunoglobulin E (IgE) receptor, mediates allergic inflammatory signaling in mast cells. As a constitutive component of interleukin-3 receptor complex, selectively mediates interleukin 4/IL4 production by basophils priming T-cells toward effector T-helper 2 subset. Associates with pattern recognition receptors CLEC4D and CLEC4E to form a functional signaling complex in myeloid cells. Binding of mycobacterial trehalose 6,6'-dimycolate (TDM) to this receptor complex leads to phosphorylation of ITAM, triggering activation of SYK, CARD9 and NF-kappa-B, consequently driving maturation of antigen-presenting cells and shaping antigen-specific priming of T-cells toward effector T-helper 1 and T-helper 17 cell subtypes. May function cooperatively with other activating receptors. Functionally linked to integrin beta-2/ITGB2-mediated neutrophil activation. Also involved in integrin alpha-2/ITGA2-mediated platelet activation. In Rattus norvegicus (Rat), this protein is High affinity immunoglobulin epsilon receptor subunit gamma (Fcer1g).